A 383-amino-acid polypeptide reads, in one-letter code: Dual-specificity RNA methyltransferase RlmN (383 aa).

Glutamate 95 functions as the Proton acceptor in the catalytic mechanism. The 249-residue stretch at 101 to 349 (EETRGTLCVS…TTVRKTRGDD (249 aa)) folds into the Radical SAM core domain. Cysteine 108 and cysteine 354 are oxidised to a cystine. Residues cysteine 115, cysteine 119, and cysteine 122 each coordinate [4Fe-4S] cluster. S-adenosyl-L-methionine-binding positions include 180 to 181 (GE), serine 212, 234 to 236 (SLH), and asparagine 311. The active-site S-methylcysteine intermediate is the cysteine 354.

The protein belongs to the radical SAM superfamily. RlmN family. [4Fe-4S] cluster is required as a cofactor.

The protein localises to the cytoplasm. The enzyme catalyses adenosine(2503) in 23S rRNA + 2 reduced [2Fe-2S]-[ferredoxin] + 2 S-adenosyl-L-methionine = 2-methyladenosine(2503) in 23S rRNA + 5'-deoxyadenosine + L-methionine + 2 oxidized [2Fe-2S]-[ferredoxin] + S-adenosyl-L-homocysteine. It catalyses the reaction adenosine(37) in tRNA + 2 reduced [2Fe-2S]-[ferredoxin] + 2 S-adenosyl-L-methionine = 2-methyladenosine(37) in tRNA + 5'-deoxyadenosine + L-methionine + 2 oxidized [2Fe-2S]-[ferredoxin] + S-adenosyl-L-homocysteine. Functionally, specifically methylates position 2 of adenine 2503 in 23S rRNA and position 2 of adenine 37 in tRNAs. m2A2503 modification seems to play a crucial role in the proofreading step occurring at the peptidyl transferase center and thus would serve to optimize ribosomal fidelity. The protein is Dual-specificity RNA methyltransferase RlmN of Paraburkholderia xenovorans (strain LB400).